A 249-amino-acid chain; its full sequence is Elongator complex protein 6 homolog (249 aa).

Belongs to the ELP6 family. In terms of assembly, component of the elongator complex.

It localises to the cytoplasm. Its subcellular location is the nucleus. It functions in the pathway tRNA modification; 5-methoxycarbonylmethyl-2-thiouridine-tRNA biosynthesis. In terms of biological role, component of the elongator complex which is required for multiple tRNA modifications, including mcm5U (5-methoxycarbonylmethyl uridine), mcm5s2U (5-methoxycarbonylmethyl-2-thiouridine), and ncm5U (5-carbamoylmethyl uridine). The elongator complex catalyzes formation of carboxymethyluridine in the wobble base at position 34 in tRNAs. The polypeptide is Elongator complex protein 6 homolog (Schizosaccharomyces pombe (strain 972 / ATCC 24843) (Fission yeast)).